A 357-amino-acid chain; its full sequence is UDP-N-acetylglucosamine--N-acetylmuramyl-(pentapeptide) pyrophosphoryl-undecaprenol N-acetylglucosamine transferase (357 aa).

Residues 13 to 15 (TGG), Asn125, Arg161, Ser189, Ile243, and Gln288 contribute to the UDP-N-acetyl-alpha-D-glucosamine site.

Belongs to the glycosyltransferase 28 family. MurG subfamily.

Its subcellular location is the cell inner membrane. It catalyses the reaction di-trans,octa-cis-undecaprenyl diphospho-N-acetyl-alpha-D-muramoyl-L-alanyl-D-glutamyl-meso-2,6-diaminopimeloyl-D-alanyl-D-alanine + UDP-N-acetyl-alpha-D-glucosamine = di-trans,octa-cis-undecaprenyl diphospho-[N-acetyl-alpha-D-glucosaminyl-(1-&gt;4)]-N-acetyl-alpha-D-muramoyl-L-alanyl-D-glutamyl-meso-2,6-diaminopimeloyl-D-alanyl-D-alanine + UDP + H(+). It participates in cell wall biogenesis; peptidoglycan biosynthesis. Functionally, cell wall formation. Catalyzes the transfer of a GlcNAc subunit on undecaprenyl-pyrophosphoryl-MurNAc-pentapeptide (lipid intermediate I) to form undecaprenyl-pyrophosphoryl-MurNAc-(pentapeptide)GlcNAc (lipid intermediate II). The chain is UDP-N-acetylglucosamine--N-acetylmuramyl-(pentapeptide) pyrophosphoryl-undecaprenol N-acetylglucosamine transferase from Bordetella parapertussis (strain 12822 / ATCC BAA-587 / NCTC 13253).